We begin with the raw amino-acid sequence, 107 residues long: Precursor of CEP14 (107 aa).

The N-terminal stretch at 1-21 is a signal peptide; sequence MAVRLIPTIWLFIVFAVIVSA. The propeptide occupies 22 to 92; that stretch reads LPSLVSSRKL…GKLRSRHLST (71 aa). N39 is a glycosylation site (N-linked (GlcNAc...) asparagine). The disordered stretch occupies residues 43 to 76; that stretch reads REEEKSHMPHVTKTSTLSALPKGKIPNSTPSKKG. Hydroxyproline occurs at positions 101 and 103.

It belongs to the C-terminally encoded plant signaling peptide (CEP) family. Interacts with CEP receptors (e.g. CEPR1 and CEPR2). In terms of processing, the mature small signaling peptide is generated by proteolytic processing of the longer precursor.

Its subcellular location is the secreted. The protein resides in the extracellular space. The protein localises to the apoplast. Functionally, extracellular signaling peptide that may regulate primary root growth rate and systemic nitrogen (N)-demand signaling. The sequence is that of Precursor of CEP14 from Arabidopsis thaliana (Mouse-ear cress).